The sequence spans 226 residues: Exopolysaccharide production protein ExoY (226 aa).

A helical transmembrane segment spans residues 34–54 (VLIAILALIALSPLFLLVMGL).

It belongs to the bacterial sugar transferase family.

The protein resides in the cell membrane. Its pathway is glycan metabolism; exopolysaccharide biosynthesis. In terms of biological role, needed for the addition of the first sugar (galactose) to the isoprenoid carrier. May function as a sugar transferase. The sequence is that of Exopolysaccharide production protein ExoY (exoY) from Sinorhizobium fredii (strain NBRC 101917 / NGR234).